The sequence spans 117 residues: Small ribosomal subunit protein uS17 (117 aa).

Belongs to the universal ribosomal protein uS17 family. Part of the 30S ribosomal subunit.

Functionally, one of the primary rRNA binding proteins, it binds specifically to the 5'-end of 16S ribosomal RNA. The sequence is that of Small ribosomal subunit protein uS17 from Methanocaldococcus jannaschii (strain ATCC 43067 / DSM 2661 / JAL-1 / JCM 10045 / NBRC 100440) (Methanococcus jannaschii).